The sequence spans 955 residues: MTENPFHYLVETLSGTSDKTFFNVSKLKATEYDSLPYCIRVVLEAVVRNCDGVLVKEQDAFNILNWKTKCEFKEIPFLPARVMLQDFTGIPAMVDFAAMRDAISKFGKDPKQVNPACPTDLIADHSLQLDFTKCIAAQNVSGLPAVETHRPTTTPGKTPGRKAQCRSQGGCKGACDLGAANGSSREQIENTPMLCPFHLQPIAEPETALKSLEIEFNRNKERLQFFKWCSKAFQNVAVIPPETGTVHQVNLEFLSRVVMEEKGCIYPDSVLGTDSHTTMVNGLGILGLGVGGIESEAAMLGVPITLTLPEVVGCELTGTINPIATSIDVVLSITKHLKQAGVAGTFVEFFGNGVSQLSVADRTTIANMCPEYGATVAFFPVDSVTLQHLKQTGVDLQCVKTFENYLKAVKLLRQENVQQPLYSKVLQINLNSIVPYVSGPKRPQDRISVMDMKKDFETCLKEKTGLKGFQIPEEKQNIMVPVTYGNSEYSLSHGCVVIAAVTSCTNNCNPSVMLTAGLLAKKAVEAGLTVKPYIKTSLSPGSGTVTYYLSASGVLPYLSKLGFDIIGYGCARCVGNTNPLPESIVTAIKEGELVACGVFSGNKHFEGNRCSCVCANYLASPPLVVAYALAGTVNIDLQTEPLGENAQGKKIFLQDIWPSREEVLEVEETLVIPSMFSELKLKIEKQNTRWNLLDAPESTLFPWDLRSTYIRSPPFFHKLEKIPPPIQPIERAYVLLYLGDSVTTDHMSPAGSIPRTSPAAKYLMQKNLVPREFNSYGARRGNDAVMTRGTFANMKLFNKLVGKTGPKTIHLPSGQTMDVFDAAELYQRSEIPLIIIAGKKYGLGNSRDWAAKGPFLLGVRVVIAESYEKIHKDHLVGMGIAPLQFLSGENAETLGLSGKEQYSLSLPVDLTPGHKVEIKTNTGKIFHVIAAFDNEAEVTLYKHGGILSYVARKYL.

Positions 504, 570, and 573 each coordinate [4Fe-4S] cluster.

The protein belongs to the aconitase/IPM isomerase family. Requires [4Fe-4S] cluster as cofactor. Ubiquitinated and degraded by the proteasome in presence of high level of iron and oxygen.

The protein resides in the cytoplasm. Its function is as follows. RNA-binding protein that binds to iron-responsive elements (IRES), which are stem-loop structures found in the 5'-UTR of ferritin, and delta aminolevulinic acid synthase mRNAs, and in the 3'-UTR of transferrin receptor mRNA. Binding to the IRE element in ferritin results in the repression of its mRNA translation. Binding of the protein to the transferrin receptor mRNA inhibits the degradation of this otherwise rapidly degraded mRNA. This chain is Iron-responsive element-binding protein 2 (ireb2), found in Xenopus laevis (African clawed frog).